A 534-amino-acid polypeptide reads, in one-letter code: Probable protein kinase UbiB (534 aa).

The chain crosses the membrane as a helical span at residues 23 to 43 (DLLFALPLPWFLLAVRYVLPW). Positions 125–492 (RFDVDPLASA…WKKRKDDWFL (368 aa)) constitute a Protein kinase domain. Residues 131–139 (LASASVAQV) and Lys153 contribute to the ATP site. Catalysis depends on Asp288, which acts as the Proton acceptor. 2 consecutive transmembrane segments (helical) span residues 490–510 (WFLR…AIGG) and 512–532 (LNQL…YLIV).

The protein belongs to the ABC1 family. UbiB subfamily.

It localises to the cell inner membrane. Its pathway is cofactor biosynthesis; ubiquinone biosynthesis [regulation]. Functionally, is probably a protein kinase regulator of UbiI activity which is involved in aerobic coenzyme Q (ubiquinone) biosynthesis. The sequence is that of Probable protein kinase UbiB from Pseudomonas fluorescens (strain SBW25).